The following is a 249-amino-acid chain: tRNA pseudouridine synthase A (249 aa).

Asp52 acts as the Nucleophile in catalysis. Tyr111 provides a ligand contact to substrate.

Belongs to the tRNA pseudouridine synthase TruA family. As to quaternary structure, homodimer.

It carries out the reaction uridine(38/39/40) in tRNA = pseudouridine(38/39/40) in tRNA. Formation of pseudouridine at positions 38, 39 and 40 in the anticodon stem and loop of transfer RNAs. This Caulobacter sp. (strain K31) protein is tRNA pseudouridine synthase A.